A 224-amino-acid polypeptide reads, in one-letter code: Ribose-5-phosphate isomerase A (224 aa).

Residues 26–29 (TGST), 82–85 (DGAD), and 95–98 (KGGG) each bind substrate. Glu-104 acts as the Proton acceptor in catalysis. A substrate-binding site is contributed by Lys-122.

Belongs to the ribose 5-phosphate isomerase family. Homodimer.

The catalysed reaction is aldehydo-D-ribose 5-phosphate = D-ribulose 5-phosphate. Its pathway is carbohydrate degradation; pentose phosphate pathway; D-ribose 5-phosphate from D-ribulose 5-phosphate (non-oxidative stage): step 1/1. Catalyzes the reversible conversion of ribose-5-phosphate to ribulose 5-phosphate. The sequence is that of Ribose-5-phosphate isomerase A from Lactococcus lactis subsp. cremoris (strain MG1363).